A 102-amino-acid chain; its full sequence is Small ribosomal subunit protein uS14 (102 aa).

Belongs to the universal ribosomal protein uS14 family. Part of the 30S ribosomal subunit. Contacts proteins S3 and S10.

Its function is as follows. Binds 16S rRNA, required for the assembly of 30S particles and may also be responsible for determining the conformation of the 16S rRNA at the A site. The polypeptide is Small ribosomal subunit protein uS14 (Wolbachia pipientis subsp. Culex pipiens (strain wPip)).